A 175-amino-acid chain; its full sequence is NADH-ubiquinone oxidoreductase chain 6 (175 aa).

6 helical membrane passes run 1-21 (MMYIVFIMSVLYVVGFIGFSS), 25-45 (PVYGGMSLVVSGGLGCGIIMG), 51-71 (LGLVVFLVYLGGMMVVFGYTI), 87-107 (VVLGAFLVGLLMEVFMIMWLF), 112-132 (ELVGFYFGGLEDLMVLGEGGF), and 148-168 (YGFWFLAMAGWMLFVSIFIAI).

It belongs to the complex I subunit 6 family. Core subunit of respiratory chain NADH dehydrogenase (Complex I) which is composed of 45 different subunits.

Its subcellular location is the mitochondrion inner membrane. The enzyme catalyses a ubiquinone + NADH + 5 H(+)(in) = a ubiquinol + NAD(+) + 4 H(+)(out). Core subunit of the mitochondrial membrane respiratory chain NADH dehydrogenase (Complex I) which catalyzes electron transfer from NADH through the respiratory chain, using ubiquinone as an electron acceptor. Essential for the catalytic activity and assembly of complex I. This Loxodonta africana (African elephant) protein is NADH-ubiquinone oxidoreductase chain 6 (MT-ND6).